The primary structure comprises 171 residues: Probable deoxyuridine 5'-triphosphate nucleotidohydrolase (171 aa).

Belongs to the dCTP deaminase family. Archaeal dUTPase subfamily.

The enzyme catalyses dUTP + H2O = dUMP + diphosphate + H(+). It participates in pyrimidine metabolism; dUMP biosynthesis; dUMP from dCTP (dUTP route): step 2/2. Its function is as follows. This enzyme is involved in nucleotide metabolism: it produces dUMP, the immediate precursor of thymidine nucleotides and it decreases the intracellular concentration of dUTP so that uracil cannot be incorporated into DNA. The sequence is that of Probable deoxyuridine 5'-triphosphate nucleotidohydrolase from Methanosarcina acetivorans (strain ATCC 35395 / DSM 2834 / JCM 12185 / C2A).